A 132-amino-acid polypeptide reads, in one-letter code: CLAVATA3/ESR (CLE)-related protein 2-B (132 aa).

The first 26 residues, 1 to 26, serve as a signal peptide directing secretion; sequence MASRMGMVAILSLFVCALVASTSVNA. The interval 68–132 is disordered; the sequence is NRASKQLDRE…IGPPPFLDRY (65 aa). Hydroxyproline is present on residues P82 and P85. The O-linked (Ara...) hydroxyproline glycan is linked to P85.

The protein belongs to the CLV3/ESR signal peptide family. In terms of processing, the O-glycosylation (arabinosylation) of the hydroxyproline Pro-85 enhances binding affinity of the ESR2Bp peptide for its receptor. As to expression, seed endosperm.

It localises to the secreted. Its subcellular location is the extracellular space. Functionally, extracellular signal peptide that regulates cell fate. The polypeptide is CLAVATA3/ESR (CLE)-related protein 2-B (Zea mays (Maize)).